We begin with the raw amino-acid sequence, 149 residues long: Deoxyuridine 5'-triphosphate nucleotidohydrolase (149 aa).

Residues 68–70 (RSG), Asn-81, 85–87 (LID), and Met-95 each bind substrate.

This sequence belongs to the dUTPase family. The cofactor is Mg(2+).

The enzyme catalyses dUTP + H2O = dUMP + diphosphate + H(+). The protein operates within pyrimidine metabolism; dUMP biosynthesis; dUMP from dCTP (dUTP route): step 2/2. This enzyme is involved in nucleotide metabolism: it produces dUMP, the immediate precursor of thymidine nucleotides and it decreases the intracellular concentration of dUTP so that uracil cannot be incorporated into DNA. The chain is Deoxyuridine 5'-triphosphate nucleotidohydrolase from Polynucleobacter necessarius subsp. necessarius (strain STIR1).